We begin with the raw amino-acid sequence, 77 residues long: MSVEQRVKEIIADQLGVEMEKITPEARFVDDLGADSLDVVELIMAFEEEFGVEIPDEDAEKIATVKDVLDYIKSKQG.

One can recognise a Carrier domain in the interval 1 to 76 (MSVEQRVKEI…DVLDYIKSKQ (76 aa)). Ser-36 carries the post-translational modification O-(pantetheine 4'-phosphoryl)serine.

The protein belongs to the acyl carrier protein (ACP) family. 4'-phosphopantetheine is transferred from CoA to a specific serine of apo-ACP by AcpS. This modification is essential for activity because fatty acids are bound in thioester linkage to the sulfhydryl of the prosthetic group.

The protein resides in the cytoplasm. The protein operates within lipid metabolism; fatty acid biosynthesis. Its function is as follows. Carrier of the growing fatty acid chain in fatty acid biosynthesis. The protein is Acyl carrier protein of Sulfurihydrogenibium sp. (strain YO3AOP1).